The following is a 714-amino-acid chain: A-kinase anchor protein 5 (714 aa).

2 disordered regions span residues 1-146 and 243-333; these read METS…GYVR and VLEN…VGHT. An essential to the intracellular anchoring function region spans residues 1–164; it reads METSVSEIQI…EIKAQIQPDE (164 aa). Serine 4 and serine 22 each carry phosphoserine. The span at 10-32 shows a compositional bias: basic and acidic residues; the sequence is IETKDEKRPEAASPQKERQERKT. Residue cysteine 36 is the site of S-palmitoyl cysteine attachment. The segment covering 37–50 has biased composition (basic residues); it reads FKRRKKVNKKKAKA. 2 stretches are compositionally biased toward basic and acidic residues: residues 54–63 and 88–100; these read TAEETEKHAP and KPSE…KPSE. The AKAP CaM-binding signature appears at 74 to 94; it reads AGAWASIKRLVTHRKPSESAE. The S-palmitoyl cysteine moiety is linked to residue cysteine 123. Residues 243-268 are compositionally biased toward polar residues; the sequence is VLENSAADSPQPVTSTAPLSPATTHQ. Positions 285–301 are enriched in basic and acidic residues; it reads GKDDGRRKTAAEEKKSG. The stretch at 305-312 is one 1; approximate repeat; sequence LGQAEEAS. The tract at residues 305 to 597 is 28 X 8 AA repeats of V-G-Q-A-E-E-A-T; sequence LGQAEEASSV…PIVGQAEETV (293 aa). Residues 310–323 are compositionally biased toward polar residues; it reads EASSVSQADKSVLS. The 2; approximate repeat unit spans residues 322 to 329; it reads LSQAEEAT. The 3; approximate repeat unit spans residues 330-337; the sequence is VGHTEEAT. The stretch at 350–357 is one 4; approximate repeat; the sequence is LSQAEEAT. One copy of the 5; approximate repeat lies at 358-365; that stretch reads VAQAKETV. The 6; approximate repeat unit spans residues 366–373; it reads LSQAEEVK. The 7; approximate repeat unit spans residues 398-405; it reads VSQAEEAI. One copy of the 8; approximate repeat lies at 414–421; sequence MGQAEEAT. Repeat copies occupy residues 430-437, 438-445, 446-453, 454-461, and 462-469. The stretch at 470–477 is one 14; approximate repeat; sequence VGQAGEAT. One copy of the 15; approximate repeat lies at 486–493; sequence VGQAEEAI. 4 consecutive repeat copies span residues 494–501, 502–509, 510–517, and 518–525. A 20; approximate repeat occupies 526 to 533; it reads VDQAEEAT. The stretch at 534–541 is repeat 21; that stretch reads VGQAEEAT. Residues 542-549 form a 22; approximate repeat; it reads VGQAGEAA. The stretch at 550–557 is one 23; approximate repeat; the sequence is VGQAEEAI. One copy of the 24; approximate repeat lies at 558–565; that stretch reads VAQAEEAT. Repeat unit 25 spans residues 566 to 573; sequence VGQAGEAT. The 26; approximate repeat unit spans residues 574–581; sequence VGQAEKAT. The stretch at 582–589 is one 27; approximate repeat; sequence VGQAEEPI. The 28; approximate repeat unit spans residues 590–597; sequence VGQAEETV. An RII-beta subunit binding domain region spans residues 675–696; sequence YETLLIETASSLVKNAIELSVE. The tethers NFATC2 to CRAC channels stretch occupies residues 697–714; that stretch reads QLVNEMVSEDNQINTLFQ.

Binding protein for dimer of the RII-beta regulatory subunit of cAMP-dependent protein kinase (PKA) and also for the protein kinase C (PKC) and the phosphatase calcineurin (PP2B). Each enzyme is inhibited when bound to the anchoring protein. Also binds the beta2-adrenergic receptor. Part of a complex containing AKAP5, ADCY5, ADCY6 and PDE4C. Interacts with ADCY8, and enhances its phosphorylation at lipid rafts. Interacts with ORAI1 (isoform alpha) (via N-terminus) upon store depletion and in response to LTC4. Does not interact with ORAI2 and ORAI3 paralogs. Interacts (via leucine zipper domain) with NFATC2/NFAT1. Interacts with calmodulin; the interaction is calcium-independent. Interacts with KCNQ2; the interaction may help KCNQ2 channel complex to retain calcium-bound calmodulin. Interacts with KCNK2; the channel is recruited to postsynaptic microdomains by AKAP5 where it can integrate neurotransmitter receptor signals. Part of a complex composed of AKAP5 and ADRB2. Post-translationally, palmitoylated. Palmitoylation at Cys-36 and Cys-123 plays a key role in the targeting of AKAP5 to lipid rafts. Palmitoylation by ZDHHC2 is required for AKAP5 function in LTP-stimulated recycling endosome exocytosis.

It localises to the postsynaptic recycling endosome membrane. It is found in the cell projection. Its subcellular location is the dendrite. The protein localises to the postsynaptic cell membrane. In terms of biological role, multivalent scaffold protein that anchors the cAMP-dependent protein kinase/PKA to cytoskeletal and/or organelle-associated proteins, targeting the signal carried by cAMP to specific intracellular effectors. Association with the beta2-adrenergic receptor (beta2-AR) not only regulates beta2-AR signaling pathway, but also the activation by PKA by switching off the beta2-AR signaling cascade. Plays a role in long term synaptic potentiation by regulating protein trafficking from the dendritic recycling endosomes to the plasma membrane and controlling both structural and functional plasticity at excitatory synapses. In hippocampal pyramidal neurons, recruits KCNK2/TREK-1 channel at postsynaptic dense bodies microdomains and converts it to a leak channel no longer sensitive to stimulation by arachidonic acid, acidic pH or mechanical stress, nor inhibited by Gq-coupled receptors but still under the negative control of Gs-coupled receptors. Associates with ORAI1 pore-forming subunit of CRAC channels in Ca(2+) signaling microdomains where it recruits NFATC2/NFAT1 and couples store-operated Ca(2+) influx to calmodulin and calcineurin signaling and activation of NFAT-dependent transcriptional responses. The protein is A-kinase anchor protein 5 (Akap5) of Rattus norvegicus (Rat).